Reading from the N-terminus, the 187-residue chain is Large ribosomal subunit protein bL25 (187 aa).

It belongs to the bacterial ribosomal protein bL25 family. CTC subfamily. Part of the 50S ribosomal subunit; part of the 5S rRNA/L5/L18/L25 subcomplex. Contacts the 5S rRNA. Binds to the 5S rRNA independently of L5 and L18.

In terms of biological role, this is one of the proteins that binds to the 5S RNA in the ribosome where it forms part of the central protuberance. The chain is Large ribosomal subunit protein bL25 from Tropheryma whipplei (strain Twist) (Whipple's bacillus).